A 409-amino-acid polypeptide reads, in one-letter code: Isovaleryl-CoA dehydrogenase, mitochondrial (409 aa).

The transit peptide at 1 to 22 directs the protein to the mitochondrion; that stretch reads MAAAQRWLPGILRRGDGLARRL. Residues 151–160 and 184–186 each bind FAD; these read LAMSEPNSGS and WCT. S160 contacts substrate. Residues 206–207, Y261, and 268–271 contribute to the substrate site; these read SK and DLER. The Proton acceptor role is filled by E270. FAD contacts are provided by residues R296, Q307, and 364–368; that span reads QCLGG. 391 to 392 is a binding site for substrate; sequence AG. 393–395 serves as a coordination point for FAD; the sequence is TSE.

The protein belongs to the acyl-CoA dehydrogenase family. Homodimer. The cofactor is FAD.

The protein resides in the mitochondrion. It catalyses the reaction 3-methylbutanoyl-CoA + oxidized [electron-transfer flavoprotein] + H(+) = 3-methylbut-2-enoyl-CoA + reduced [electron-transfer flavoprotein]. It participates in amino-acid degradation; L-leucine degradation; (S)-3-hydroxy-3-methylglutaryl-CoA from 3-isovaleryl-CoA: step 1/3. This is Isovaleryl-CoA dehydrogenase, mitochondrial from Oryza sativa subsp. japonica (Rice).